The primary structure comprises 446 residues: Tubulin beta-3 chain (446 aa).

Residues Gln-11, Glu-69, Ser-138, Gly-142, Thr-143, Gly-144, Asn-204, and Asn-226 each contribute to the GTP site. Residue Glu-69 participates in Mg(2+) binding. Positions 421–446 (EYQQYQDATAEEEDYEEEEEDEEVAA) are disordered. Acidic residues predominate over residues 429–446 (TAEEEDYEEEEEDEEVAA).

It belongs to the tubulin family. Dimer of alpha and beta chains. A typical microtubule is a hollow water-filled tube with an outer diameter of 25 nm and an inner diameter of 15 nM. Alpha-beta heterodimers associate head-to-tail to form protofilaments running lengthwise along the microtubule wall with the beta-tubulin subunit facing the microtubule plus end conferring a structural polarity. Microtubules usually have 13 protofilaments but different protofilament numbers can be found in some organisms and specialized cells. Mg(2+) is required as a cofactor. As to expression, expressed in roots, second node, leaf sheaths, and suspension cultured cells.

The protein resides in the cytoplasm. Its subcellular location is the cytoskeleton. Its function is as follows. Tubulin is the major constituent of microtubules, a cylinder consisting of laterally associated linear protofilaments composed of alpha- and beta-tubulin heterodimers. Microtubules grow by the addition of GTP-tubulin dimers to the microtubule end, where a stabilizing cap forms. Below the cap, tubulin dimers are in GDP-bound state, owing to GTPase activity of alpha-tubulin. In Oryza sativa subsp. japonica (Rice), this protein is Tubulin beta-3 chain (TUBB3).